A 257-amino-acid chain; its full sequence is Acyl-[acyl-carrier-protein]--UDP-N-acetylglucosamine O-acyltransferase (257 aa).

This sequence belongs to the transferase hexapeptide repeat family. LpxA subfamily. In terms of assembly, homotrimer.

Its subcellular location is the cytoplasm. The enzyme catalyses a (3R)-hydroxyacyl-[ACP] + UDP-N-acetyl-alpha-D-glucosamine = a UDP-3-O-[(3R)-3-hydroxyacyl]-N-acetyl-alpha-D-glucosamine + holo-[ACP]. The protein operates within glycolipid biosynthesis; lipid IV(A) biosynthesis; lipid IV(A) from (3R)-3-hydroxytetradecanoyl-[acyl-carrier-protein] and UDP-N-acetyl-alpha-D-glucosamine: step 1/6. Its function is as follows. Involved in the biosynthesis of lipid A, a phosphorylated glycolipid that anchors the lipopolysaccharide to the outer membrane of the cell. The polypeptide is Acyl-[acyl-carrier-protein]--UDP-N-acetylglucosamine O-acyltransferase (Anaeromyxobacter sp. (strain K)).